A 156-amino-acid chain; its full sequence is Riboflavin synthase (156 aa).

It belongs to the DMRL synthase family.

It carries out the reaction 2 6,7-dimethyl-8-(1-D-ribityl)lumazine + H(+) = 5-amino-6-(D-ribitylamino)uracil + riboflavin. It functions in the pathway cofactor biosynthesis; riboflavin biosynthesis; riboflavin from 2-hydroxy-3-oxobutyl phosphate and 5-amino-6-(D-ribitylamino)uracil: step 2/2. The sequence is that of Riboflavin synthase (ribC) from Methanocaldococcus jannaschii (strain ATCC 43067 / DSM 2661 / JAL-1 / JCM 10045 / NBRC 100440) (Methanococcus jannaschii).